Consider the following 559-residue polypeptide: Dihydroxy-acid dehydratase (559 aa).

Asp-80 lines the Mg(2+) pocket. A [2Fe-2S] cluster-binding site is contributed by Cys-121. Residues Asp-122 and Lys-123 each coordinate Mg(2+). At Lys-123 the chain carries N6-carboxylysine. Cys-194 provides a ligand contact to [2Fe-2S] cluster. Glu-447 lines the Mg(2+) pocket. Ser-473 serves as the catalytic Proton acceptor.

Belongs to the IlvD/Edd family. As to quaternary structure, homodimer. Requires [2Fe-2S] cluster as cofactor. Mg(2+) is required as a cofactor.

The enzyme catalyses (2R)-2,3-dihydroxy-3-methylbutanoate = 3-methyl-2-oxobutanoate + H2O. It catalyses the reaction (2R,3R)-2,3-dihydroxy-3-methylpentanoate = (S)-3-methyl-2-oxopentanoate + H2O. It participates in amino-acid biosynthesis; L-isoleucine biosynthesis; L-isoleucine from 2-oxobutanoate: step 3/4. It functions in the pathway amino-acid biosynthesis; L-valine biosynthesis; L-valine from pyruvate: step 3/4. Functions in the biosynthesis of branched-chain amino acids. Catalyzes the dehydration of (2R,3R)-2,3-dihydroxy-3-methylpentanoate (2,3-dihydroxy-3-methylvalerate) into 2-oxo-3-methylpentanoate (2-oxo-3-methylvalerate) and of (2R)-2,3-dihydroxy-3-methylbutanoate (2,3-dihydroxyisovalerate) into 2-oxo-3-methylbutanoate (2-oxoisovalerate), the penultimate precursor to L-isoleucine and L-valine, respectively. The polypeptide is Dihydroxy-acid dehydratase (Chlorobium chlorochromatii (strain CaD3)).